A 188-amino-acid polypeptide reads, in one-letter code: Transcription factor FapR (188 aa).

The protein belongs to the FapR family.

Transcriptional factor involved in regulation of membrane lipid biosynthesis by repressing genes involved in fatty acid and phospholipid metabolism. This is Transcription factor FapR from Bacillus velezensis (strain DSM 23117 / BGSC 10A6 / LMG 26770 / FZB42) (Bacillus amyloliquefaciens subsp. plantarum).